The primary structure comprises 119 residues: Large ribosomal subunit protein bL20 (119 aa).

This sequence belongs to the bacterial ribosomal protein bL20 family.

Binds directly to 23S ribosomal RNA and is necessary for the in vitro assembly process of the 50S ribosomal subunit. It is not involved in the protein synthesizing functions of that subunit. This Delftia acidovorans (strain DSM 14801 / SPH-1) protein is Large ribosomal subunit protein bL20.